We begin with the raw amino-acid sequence, 415 residues long: Putative FNIP repeat-containing protein L415 (415 aa).

An FNIP repeat occupies 148 to 185 (FIKKGAIPDSVTHLYFGSDYLSKDIIPKNVVYLRFGDF).

The chain is Putative FNIP repeat-containing protein L415 from Acanthamoeba polyphaga mimivirus (APMV).